A 152-amino-acid polypeptide reads, in one-letter code: Transcription elongation factor Spt5 (152 aa).

The 30-residue stretch at 98-127 (EGDLVEVVSGPFRGMQAQVVKVTEGKGEVV) folds into the KOW domain.

This sequence belongs to the archaeal Spt5 family. Heterodimer composed of Spt4 and Spt5. Interacts with RNA polymerase (RNAP).

Functionally, stimulates transcription elongation. This is Transcription elongation factor Spt5 from Acidianus ambivalens (Desulfurolobus ambivalens).